The sequence spans 354 residues: N-acetyl-gamma-glutamyl-phosphate reductase (354 aa).

The active site involves Cys-156.

Belongs to the NAGSA dehydrogenase family. Type 1 subfamily.

It is found in the cytoplasm. The enzyme catalyses N-acetyl-L-glutamate 5-semialdehyde + phosphate + NADP(+) = N-acetyl-L-glutamyl 5-phosphate + NADPH + H(+). It participates in amino-acid biosynthesis; L-arginine biosynthesis; N(2)-acetyl-L-ornithine from L-glutamate: step 3/4. Its function is as follows. Catalyzes the NADPH-dependent reduction of N-acetyl-5-glutamyl phosphate to yield N-acetyl-L-glutamate 5-semialdehyde. This is N-acetyl-gamma-glutamyl-phosphate reductase from Bordetella pertussis (strain Tohama I / ATCC BAA-589 / NCTC 13251).